The sequence spans 312 residues: Ribosomal protein L11 methyltransferase (312 aa).

4 residues coordinate S-adenosyl-L-methionine: Thr162, Gly183, Asp205, and Asn248.

The protein belongs to the methyltransferase superfamily. PrmA family.

Its subcellular location is the cytoplasm. The catalysed reaction is L-lysyl-[protein] + 3 S-adenosyl-L-methionine = N(6),N(6),N(6)-trimethyl-L-lysyl-[protein] + 3 S-adenosyl-L-homocysteine + 3 H(+). In terms of biological role, methylates ribosomal protein L11. This chain is Ribosomal protein L11 methyltransferase, found in Bacillus cereus (strain ATCC 10987 / NRS 248).